A 393-amino-acid polypeptide reads, in one-letter code: Cytotoxic and regulatory T-cell molecule (393 aa).

Residues 1–17 form the signal peptide; the sequence is MWWRVLSLLAWFPLQEA. The 97-residue stretch at 18–114 folds into the Ig-like V-type domain; that stretch reads SLTNHTETIT…VSTKEVKVIV (97 aa). The Extracellular segment spans residues 18–287; the sequence is SLTNHTETIT…YLGLARKKSG (270 aa). Residues N21, N87, and N178 are each glycosylated (N-linked (GlcNAc...) asparagine). Cystine bridges form between C38–C98 and C141–C196. The Ig-like C2-type domain occupies 118-210; sequence PFKPILEASV…RGLQGRKLVA (93 aa). Positions 225-273 are disordered; the sequence is SDALERNSLSSQDPQQPTSTVSVTEDSSTSEIDKEEKEQTTQDPDLTTE. Residues 231–241 are compositionally biased toward polar residues; sequence NSLSSQDPQQP. The span at 242–254 shows a compositional bias: low complexity; sequence TSTVSVTEDSSTS. Over residues 255–264 the composition is skewed to basic and acidic residues; it reads EIDKEEKEQT. The chain crosses the membrane as a helical span at residues 288-308; the sequence is ILLLTLVSFLIFILFIIVQLF. Residues 309-393 are Cytoplasmic-facing; sequence IMKLRKAHVI…KHIQVPESIV (85 aa). Composition is skewed to basic and acidic residues over residues 328–348 and 374–387; these read HTLE…EEKN and ENVQ…KHIQ. Disordered regions lie at residues 328–354 and 374–393; these read HTLE…SSHP and ENVQ…ESIV. Residues 390-393 carry the PDZ-binding motif; sequence ESIV.

Belongs to the nectin family. Monomer. May form homodimer (via Ig-like V-type domain). Interacts (via Ig-like V-type domain) with CADM1 (via Ig-like V-type domain); the interaction competes with CRTAM homodimerization and CADM1 homodimerization. Interacts (via PDZ-binding motif) with SCRIB (via PDZ domain 3); the interaction promotes CRTAM and SCRIB polarization in a subset of CD4+ T-cells. As to expression, in the immune system, expression is restricted to activated class-I MHC-restricted cells, including NKT and CD8 T-cells. Strongly expressed in spleen, thymus, small intestine, peripheral blood leukocyte, and in Purkinje neurons in cerebellum. Expressed at much lower levels in testis, ovary, colon, lung and lymphoid tissues.

Its subcellular location is the cell membrane. In terms of biological role, mediates heterophilic cell-cell adhesion which regulates the activation, differentiation and tissue retention of various T-cell subsets. Interaction with CADM1 promotes natural killer (NK) cell cytotoxicity and IFNG/interferon-gamma secretion by CD8+ T-cells in vitro as well as NK cell-mediated rejection of tumors expressing CADM1 in vivo. Regulates CD8+ T-cell proliferation in response to T-cell receptor (TCR) activation. Appears to be dispensable for CD8+ T-cell-mediated cytotoxicity. Interaction with SCRIB promotes the late phase of cellular polarization of a subset of CD4+ T-cells, which in turn regulates TCR-mediated proliferation and IFNG, IL17 and IL22 production. By interacting with CADM1 on CD8+ dendritic cells, regulates the retention of activated CD8+ T-cells within the draining lymph node. Required for the intestinal retention of intraepithelial CD4+ CD8+ T-cells and, to a lesser extent, intraepithelial and lamina propria CD8+ T-cells and CD4+ T-cells. Interaction with CADM1 promotes the adhesion to gut-associated CD103+ dendritic cells, which may facilitate the expression of gut-homing and adhesion molecules on T-cells and the conversion of CD4+ T-cells into CD4+ CD8+ T-cells. The polypeptide is Cytotoxic and regulatory T-cell molecule (Homo sapiens (Human)).